The chain runs to 396 residues: Glyceraldehyde-3-phosphate dehydrogenase GAPA1, chloroplastic (396 aa).

The transit peptide at 1-60 directs the protein to the chloroplast; it reads MASVTFSVPKGFTEFSGLRSSSASLPFGKKLSSDEFVSIVSFQTSAMGSSGGYRKGVTEA. NADP(+)-binding positions include 71–72, aspartate 95, and arginine 140; that span reads RI. D-glyceraldehyde 3-phosphate-binding positions include 212–214, threonine 243, arginine 258, 271–272, and arginine 294; these read SCT and TG. Catalysis depends on cysteine 213, which acts as the Nucleophile. Asparagine 376 lines the NADP(+) pocket.

It belongs to the glyceraldehyde-3-phosphate dehydrogenase family. In terms of assembly, tetramer of either four A chains (GAPDH 2) or two A and two B chains (GAPDH 1). Expressed in leaves and stems.

Its subcellular location is the plastid. The protein localises to the chloroplast membrane. The protein resides in the chloroplast stroma. The enzyme catalyses D-glyceraldehyde 3-phosphate + phosphate + NADP(+) = (2R)-3-phospho-glyceroyl phosphate + NADPH + H(+). Its pathway is carbohydrate biosynthesis; Calvin cycle. Functionally, involved in the photosynthetic reductive pentose phosphate pathway (Calvin-Benson cycle). Catalyzes the reduction of 1,3-diphosphoglycerate by NADPH. This Arabidopsis thaliana (Mouse-ear cress) protein is Glyceraldehyde-3-phosphate dehydrogenase GAPA1, chloroplastic (GAPA1).